A 486-amino-acid polypeptide reads, in one-letter code: Protein kinase C and casein kinase substrate in neurons protein 2 (486 aa).

Positions 11 to 282 (VEVSSDSFWE…SIKAADAVED (272 aa)) constitute an F-BAR domain. A coiled-coil region spans residues 25-274 (KRTVKRIDDG…TIYRELEQSI (250 aa)). Lys53 carries the post-translational modification N6-acetyllysine. At Ser273 the chain carries Phosphoserine. Ser313 is subject to Phosphoserine; by PKC. Positions 315 to 426 (REKKKAVDGV…NPFDEDTTSG (112 aa)) are disordered. Residues 327–362 (TGINQTGDQSGQNKPGSNLSVPSNPAQSTQLQSSYN) show a composition bias toward polar residues. The NPF1 signature appears at 362-364 (NPF). Position 373 is a phosphoserine; by IKKB (Ser373). Residues 384 to 396 (NVSSYEKTQTYPT) show a composition bias toward polar residues. Phosphoserine is present on Ser399. The segment covering 404 to 416 (NNPFSSTDANGDS) has biased composition (polar residues). The NPF2 signature appears at 405–407 (NPF). An NPF3 motif is present at residues 417-419 (NPF). The SH3 domain maps to 426 to 486 (GTEVRVRALY…YPANYVEAIQ (61 aa)). A Phosphoserine modification is found at Ser446.

This sequence belongs to the PACSIN family. As to quaternary structure, homodimer. May form heterooligomers with other PACSINs. Interacts (via NPF motifs) with EHD1 (via EH domain). Interacts (via NPF motifs) with EHD2 (via EH domain); this interaction probably stabilizes the caveolae. Interacts with EHD3. Interacts (via the SH3 domain) with MICALL1. Interacts with RAC1. Interacts (via SH3 domain) with DNM1, SYN1, SYNJ1 and WASL. Interacts (via F-BAR domain) with CAV1; this interaction induces membrane tubulation. Interacts with TRPV4. Forms a complex with EHD4 and MICALL1; the complex controls CDH5 trafficking and coordinates angiogenesis. Post-translationally, phosphorylated by casein kinase 2 (CK2). Phosphorylation by PKC probably decreases the membrane binding and tubulation capacities of PACSIN2, thereby modulating the lifetime of caveolae. In terms of tissue distribution, widely expressed (at protein level).

It is found in the cytoplasm. Its subcellular location is the cytoskeleton. The protein resides in the cytoplasmic vesicle membrane. It localises to the cell projection. The protein localises to the ruffle membrane. It is found in the early endosome. Its subcellular location is the recycling endosome membrane. The protein resides in the cell membrane. It localises to the membrane. The protein localises to the caveola. It is found in the cell junction. Its subcellular location is the adherens junction. Its function is as follows. Regulates the morphogenesis and endocytosis of caveolae. Lipid-binding protein that is able to promote the tubulation of the phosphatidic acid-containing membranes it preferentially binds. Plays a role in intracellular vesicle-mediated transport. Involved in the endocytosis of cell-surface receptors like the EGF receptor, contributing to its internalization in the absence of EGF stimulus. Essential for endothelial organization in sprouting angiogenesis, modulates CDH5-based junctions. Facilitates endothelial front-rear polarity during migration by recruiting EHD4 and MICALL1 to asymmetric adherens junctions between leader and follower cells. The sequence is that of Protein kinase C and casein kinase substrate in neurons protein 2 (Pacsin2) from Mus musculus (Mouse).